Reading from the N-terminus, the 215-residue chain is UPF0502 protein YceH (215 aa).

Lys-80 carries the N6-acetyllysine modification.

This sequence belongs to the UPF0502 family.

The sequence is that of UPF0502 protein YceH from Escherichia coli (strain K12 / MC4100 / BW2952).